We begin with the raw amino-acid sequence, 453 residues long: Regulatory protein opaque-2 (453 aa).

The disordered stretch occupies residues 145–243 (SSVVTSDQRS…SNRESARRSR (99 aa)). Positions 146-175 (SVVTSDQRSQGSNNHTGGSSIRNNPVQNKL) are enriched in polar residues. Positions 207–216 (PSDEDMDGEV) are enriched in acidic residues. Positions 224–240 (PTEERVRKKESNRESAR) are enriched in basic and acidic residues. A bZIP domain is found at 225–288 (TEERVRKKES…NDANVDNRVL (64 aa)). Residues 228–251 (RVRKKESNRESARRSRYRKAAHLK) form a basic motif region. The interval 253–274 (LEDQVAQLKAENSCLLRRIAAL) is leucine-zipper.

It belongs to the bZIP family. Interacts with the Dof zinc finger protein PBF. Seed endosperm.

It localises to the nucleus. Its function is as follows. Involved in the regulation of the endosperm-specific production of albumin b-32 and other zein proteins. It is a trans-acting transcriptional activator that binds to the consensus sequence 5'-GATGAYRTGR-3'. In Zea mays (Maize), this protein is Regulatory protein opaque-2 (O2).